Consider the following 605-residue polypeptide: MAKKPAAHATKPKPWTEMATHLVDVAMGRKPADLVIRNGRWVNVHSGEIIAGTDIAIAGGRFAYCGPNASHAIGQGTKVVDAGGRYLVPGLCDAHMHVESGMVTVTEFCRAVIPHGTTSMFIDPHEIANVLGLPGVRLMHDEAVAMPINVHVQMPSCVPSAPGLEHAGAELTVADVAEAMTWENIIGLGEVMNFPGVAANDPVMSGEIAATVRAGKTVGGHYASRDLGLPFHGYVAGGPEDDHEGTRAEDAIARVRQGMKAMLRLGSAWYDVASQIKAVTEGGIDPRNFILCTDDSHSGTLVHEGHMDRVVRHAIQQGLKPVTAIQMATINTAQHFRLEREIGSIAPGRLADLLIVSDLAAMTIDEVYARGVRLAKGGKLDIDIPAYDYPKTAKNTVKLGKKLRAGDFDITAPKGANEVRVRVIGVIENQAPTRALEADLPVEDGLVAMDRRNDVCQIALVERHRGTGGVTNAFVSGFGYMGDCAMASSVAHDAHHIICVGTNKQDMALAVNRLGQVGGGVVLFSKGKELALVEMPIAGLMSDERAEIVAAKAEKLTEAMRKMGCSLNNAYMQHSLLALVVIPELRISDVGLIDVTTFQKVDLFV.

The protein belongs to the metallo-dependent hydrolases superfamily. Adenine deaminase family. Requires Mn(2+) as cofactor.

It catalyses the reaction adenine + H2O + H(+) = hypoxanthine + NH4(+). This is Adenine deaminase from Mesorhizobium japonicum (strain LMG 29417 / CECT 9101 / MAFF 303099) (Mesorhizobium loti (strain MAFF 303099)).